A 107-amino-acid chain; its full sequence is Cytochrome c2 (107 aa).

Gln-1 is modified (pyrrolidone carboxylic acid). Cys-13, Cys-16, His-17, and Met-79 together coordinate heme c.

This sequence belongs to the cytochrome c family. In terms of processing, binds 1 heme c group covalently per subunit.

It is found in the periplasm. Cytochrome c2 is found mainly in purple, non-sulfur, photosynthetic bacteria where it functions as the electron donor to the oxidized bacteriochlorophyll in the photophosphorylation pathway. However, it may also have a role in the respiratory chain and is found in some non-photosynthetic bacteria. In Rhodoplanes tepidamans (Rhodoplanes cryptolactis), this protein is Cytochrome c2.